The chain runs to 184 residues: Ribosome-recycling factor (184 aa).

The protein belongs to the RRF family.

It is found in the cytoplasm. In terms of biological role, responsible for the release of ribosomes from messenger RNA at the termination of protein biosynthesis. May increase the efficiency of translation by recycling ribosomes from one round of translation to another. This Acinetobacter baumannii (strain SDF) protein is Ribosome-recycling factor.